Here is a 117-residue protein sequence, read N- to C-terminus: Large ribosomal subunit protein bL20 (117 aa).

This sequence belongs to the bacterial ribosomal protein bL20 family.

Functionally, binds directly to 23S ribosomal RNA and is necessary for the in vitro assembly process of the 50S ribosomal subunit. It is not involved in the protein synthesizing functions of that subunit. In Wolinella succinogenes (strain ATCC 29543 / DSM 1740 / CCUG 13145 / JCM 31913 / LMG 7466 / NCTC 11488 / FDC 602W) (Vibrio succinogenes), this protein is Large ribosomal subunit protein bL20.